The sequence spans 331 residues: MAKLNQVTLSKIGKNGDQTLTLTPRGVNPTNGVASLSEAGAVPALEKRVTVSVAQPSRNRKNFKVQIKLQNPTACTRDACDPSVTRSAFADVTLSFTSYSTDEERALIRTELAALLADPLIVDAIDNLNPAYWAALLVASSGGGDNPSDPDVPVVPDVKPPDGTGRYKCPFACYRLGSIYEVGKEGSPDIYERGDEVSVTFDYALEDFLGNTNWRNWDQRLSDYDIANRRRCRGNGYIDLDATAMQSDDFVLSGRYGVRKVKFPGAFGSIKYLLNIQGDAWLDLSEVTAYRSYGMVIGFWTDSKSPQLPTDFTQFNSANCPVQTVIIIPSL.

Its subcellular location is the virion. Minor capsid protein. The protein is Minor capsid protein A1 of Escherichia coli (Bacteriophage SP).